The chain runs to 313 residues: 3'-5' exoribonuclease YhaM (313 aa).

A DNA-binding region (OB) is located at residues 22–90 (SSVKGTASNG…QLKIRQIRQA (69 aa)). Positions 163 to 279 (HVVSMLRLAK…LHQIDLMDAS (117 aa)) constitute an HD domain.

This sequence belongs to the YhaM family.

Its function is as follows. Shows a 3'-5' exoribonuclease activity. The polypeptide is 3'-5' exoribonuclease YhaM (Listeria innocua serovar 6a (strain ATCC BAA-680 / CLIP 11262)).